A 303-amino-acid chain; its full sequence is Pyridoxal 5'-phosphate synthase subunit PdxS (303 aa).

Asp-33 contributes to the D-ribose 5-phosphate binding site. The Schiff-base intermediate with D-ribose 5-phosphate role is filled by Lys-90. Gly-162 provides a ligand contact to D-ribose 5-phosphate. Arg-174 contributes to the D-glyceraldehyde 3-phosphate binding site. D-ribose 5-phosphate contacts are provided by residues Gly-223 and 244 to 245 (GS).

This sequence belongs to the PdxS/SNZ family. As to quaternary structure, in the presence of PdxT, forms a dodecamer of heterodimers.

The catalysed reaction is aldehydo-D-ribose 5-phosphate + D-glyceraldehyde 3-phosphate + L-glutamine = pyridoxal 5'-phosphate + L-glutamate + phosphate + 3 H2O + H(+). It functions in the pathway cofactor biosynthesis; pyridoxal 5'-phosphate biosynthesis. Its function is as follows. Catalyzes the formation of pyridoxal 5'-phosphate from ribose 5-phosphate (RBP), glyceraldehyde 3-phosphate (G3P) and ammonia. The ammonia is provided by the PdxT subunit. Can also use ribulose 5-phosphate and dihydroxyacetone phosphate as substrates, resulting from enzyme-catalyzed isomerization of RBP and G3P, respectively. This Mycobacterium avium (strain 104) protein is Pyridoxal 5'-phosphate synthase subunit PdxS.